The primary structure comprises 306 residues: Ornithine carbamoyltransferase (306 aa).

Carbamoyl phosphate contacts are provided by residues 50-53, glutamine 77, arginine 101, and 128-131; these read STRT and HPCQ. L-ornithine is bound by residues asparagine 160, aspartate 224, and 228–229; that span reads SM. Carbamoyl phosphate-binding positions include 261 to 262 and arginine 289; that span reads CL.

The protein belongs to the aspartate/ornithine carbamoyltransferase superfamily. OTCase family.

The protein localises to the cytoplasm. It catalyses the reaction carbamoyl phosphate + L-ornithine = L-citrulline + phosphate + H(+). The protein operates within amino-acid biosynthesis; L-arginine biosynthesis; L-arginine from L-ornithine and carbamoyl phosphate: step 1/3. Reversibly catalyzes the transfer of the carbamoyl group from carbamoyl phosphate (CP) to the N(epsilon) atom of ornithine (ORN) to produce L-citrulline. This is Ornithine carbamoyltransferase from Aquifex aeolicus (strain VF5).